Consider the following 860-residue polypeptide: Ubiquitin fusion degradation protein 3 homolog (860 aa).

6 WD repeats span residues 27 to 65 (AHKSDTKALAVTQGGCLISGGRDETVKFWAKKGKQYTKT), 71 to 112 (PKGI…PYAI), 115 to 154 (EHKQNVCCLHINEKATHMLSGSWDSNVIIWPITELNSSSF), 163 to 203 (GHTL…SVFK), 204 to 242 (GHTDVVRALVVLSSSHFLSAGNDGHIIHWDVASASILRK), and 244 to 283 (ATQAHEFIYSMTLSDSHILTTGEDGTLEFWAIDGGKDGNL). The 101-residue stretch at 397-497 (PIHYLEEITR…DKLSKGAASA (101 aa)) folds into the PFU domain. Positions 494–585 (AASAQSGYED…LPQNKKKPRG (92 aa)) are disordered. Residues 586-856 (PLVPVPDFYI…KNIARDIVEM (271 aa)) form the PUL domain.

The protein belongs to the WD repeat PLAP family. As to quaternary structure, interacts with cdc-48.1. In terms of tissue distribution, expressed in intestine (at protein level).

It is found in the cytoplasm. In terms of biological role, plays a role in protein ubiquitination, sorting and degradation through its association with cdc-48.1 and/or cdc-48.2. This Caenorhabditis elegans protein is Ubiquitin fusion degradation protein 3 homolog.